Reading from the N-terminus, the 509-residue chain is Maturase K (509 aa).

The protein belongs to the intron maturase 2 family. MatK subfamily.

The protein resides in the plastid. It is found in the chloroplast. Functionally, usually encoded in the trnK tRNA gene intron. Probably assists in splicing its own and other chloroplast group II introns. This is Maturase K from Thuja occidentalis (Northern white-cedar).